The sequence spans 254 residues: Leucyl/phenylalanyl-tRNA--protein transferase (254 aa).

Residues 1 to 10 (MSSQPPPLPW) are compositionally biased toward pro residues. The interval 1-28 (MSSQPPPLPWLDPNQDFPPTSQAWDENS) is disordered.

Belongs to the L/F-transferase family.

The protein localises to the cytoplasm. The enzyme catalyses N-terminal L-lysyl-[protein] + L-leucyl-tRNA(Leu) = N-terminal L-leucyl-L-lysyl-[protein] + tRNA(Leu) + H(+). It carries out the reaction N-terminal L-arginyl-[protein] + L-leucyl-tRNA(Leu) = N-terminal L-leucyl-L-arginyl-[protein] + tRNA(Leu) + H(+). The catalysed reaction is L-phenylalanyl-tRNA(Phe) + an N-terminal L-alpha-aminoacyl-[protein] = an N-terminal L-phenylalanyl-L-alpha-aminoacyl-[protein] + tRNA(Phe). Functions in the N-end rule pathway of protein degradation where it conjugates Leu, Phe and, less efficiently, Met from aminoacyl-tRNAs to the N-termini of proteins containing an N-terminal arginine or lysine. The polypeptide is Leucyl/phenylalanyl-tRNA--protein transferase (Albidiferax ferrireducens (strain ATCC BAA-621 / DSM 15236 / T118) (Rhodoferax ferrireducens)).